We begin with the raw amino-acid sequence, 435 residues long: Tol-Pal system protein TolB (435 aa).

Positions 1–26 (MKIFSPIRLVLAIAALMSVFSAPAFA) are cleaved as a signal peptide.

This sequence belongs to the TolB family. As to quaternary structure, the Tol-Pal system is composed of five core proteins: the inner membrane proteins TolA, TolQ and TolR, the periplasmic protein TolB and the outer membrane protein Pal. They form a network linking the inner and outer membranes and the peptidoglycan layer.

Its subcellular location is the periplasm. Part of the Tol-Pal system, which plays a role in outer membrane invagination during cell division and is important for maintaining outer membrane integrity. This chain is Tol-Pal system protein TolB, found in Agrobacterium fabrum (strain C58 / ATCC 33970) (Agrobacterium tumefaciens (strain C58)).